Here is an 854-residue protein sequence, read N- to C-terminus: Protein mono-ADP-ribosyltransferase PARP8 (854 aa).

2 disordered regions span residues 113-138 and 291-310; these read NGEE…EFYY and SYPP…EQDG. The segment covering 123–135 has biased composition (acidic residues); the sequence is VEEDSEGDNDSEE. An ADP-ribosylcysteine mark is found at cysteine 332, cysteine 367, cysteine 376, and cysteine 395. One can recognise a PARP catalytic domain in the interval 617-844; that stretch reads EMTQAPYLEI…QEGGIHKEIL (228 aa). A disordered region spans residues 750 to 777; sequence QKVSAKDEPASSSKSSNTSQSQKKGQQS. The segment covering 760 to 777 has biased composition (low complexity); that stretch reads SSSKSSNTSQSQKKGQQS.

This sequence belongs to the ARTD/PARP family. Auto-mono-ADP-ribosylated.

It carries out the reaction L-cysteinyl-[protein] + NAD(+) = S-(ADP-D-ribosyl)-L-cysteinyl-[protein] + nicotinamide + H(+). Mono-ADP-ribosyltransferase that mediates mono-ADP-ribosylation of target proteins. This chain is Protein mono-ADP-ribosyltransferase PARP8, found in Homo sapiens (Human).